The sequence spans 708 residues: Matrix metalloproteinase-9 (708 aa).

Positions 1-19 (MSPWQPLLLVLLALGYSFA) are cleaved as a signal peptide. The propeptide at 20–107 (APHQRQPTYV…PRCGVPDVGK (88 aa)) is activation peptide. N39 carries an N-linked (GlcNAc...) asparagine glycan. A Cysteine switch motif is present at residues 98 to 105 (PRCGVPDV). C100 is a Zn(2+) binding site. N-linked (GlcNAc...) asparagine glycosylation is present at N121. Residues D132 and D166 each coordinate Ca(2+). Zn(2+)-binding residues include H176 and D178. The Ca(2+) site is built by D183, G184, D186, and L188. H191 contributes to the Zn(2+) binding site. Ca(2+) contacts are provided by G198, Q200, and D202. H204 provides a ligand contact to Zn(2+). D206, D207, and E209 together coordinate Ca(2+). Fibronectin type-II domains lie at 226-274 (ANGA…FCPS), 284-332 (GDGK…FCPT), and 343-391 (SAGE…FCPD). 6 disulfides stabilise this stretch: C231/C257, C245/C272, C289/C315, C303/C330, C348/C374, and C362/C389. H402 is a binding site for Zn(2+). E403 is an active-site residue. Zn(2+) is bound by residues H406 and H412. The disordered stretch occupies residues 441 to 520 (HHLYGRGSKP…SSTPDDNPCN (80 aa)). Residues 480 to 490 (PTGGPTVAPTG) are compositionally biased toward low complexity. Over residues 491 to 502 (APSPGPTGPPTA) the composition is skewed to pro residues. A disulfide bond links C519 and C707. 4 Hemopexin repeats span residues 521–566 (VDVF…WPAF), 567–611 (PSKL…GLGS), 613–660 (VTLV…FSGV), and 661–707 (PWNS…LLQC).

Belongs to the peptidase M10A family. Exists as monomer or homodimer; disulfide-linked. Also exists as heterodimer with LCN2. Macrophages and transformed cell lines produce only the monomeric form. Interacts with ECM1. The cofactor is Zn(2+). Ca(2+) is required as a cofactor. N- and O-glycosylated.

It is found in the secreted. The protein localises to the extracellular space. It localises to the extracellular matrix. The enzyme catalyses Cleavage of gelatin types I and V and collagen types IV and V.. Matrix metalloproteinase that plays an essential role in local proteolysis of the extracellular matrix and in leukocyte migration. Could play a role in bone osteoclastic resorption. Cleaves KiSS1 at a Gly-|-Leu bond. Cleaves NINJ1 to generate the Secreted ninjurin-1 form. Cleaves type IV and type V collagen into large C-terminal three quarter fragments and shorter N-terminal one quarter fragments. Degrades fibronectin but not laminin or Pz-peptide. This Rattus norvegicus (Rat) protein is Matrix metalloproteinase-9 (Mmp9).